Here is a 198-residue protein sequence, read N- to C-terminus: MQRVGILGGTFDPIHFAHLAIAEEARVVLGLSQVVFIPTAQQPLKQQHFSSAYQRLAMTKLAIADNPAFSVSTIEVERSGVSYTIDTIQTLHQDQPHIEWWLIVGSDSLATLSRWHAAHDLVQLAHFAILERPGFELDWPALLDQFPELAKRSVRIQGPRMDLSATELRSRLQAGLPVRYLVPDAVASYIAQQQLYLA.

Belongs to the NadD family.

It catalyses the reaction nicotinate beta-D-ribonucleotide + ATP + H(+) = deamido-NAD(+) + diphosphate. Its pathway is cofactor biosynthesis; NAD(+) biosynthesis; deamido-NAD(+) from nicotinate D-ribonucleotide: step 1/1. Functionally, catalyzes the reversible adenylation of nicotinate mononucleotide (NaMN) to nicotinic acid adenine dinucleotide (NaAD). This is Probable nicotinate-nucleotide adenylyltransferase from Herpetosiphon aurantiacus (strain ATCC 23779 / DSM 785 / 114-95).